The following is a 239-amino-acid chain: Fatty acid metabolism regulator protein (239 aa).

Residues 6-74 (QSPAGFAEEY…HGKPTKVNNF (69 aa)) form the HTH gntR-type domain. The H-T-H motif DNA-binding region spans 34–53 (ERELSELIGVTRTTLREVLQ).

As to quaternary structure, homodimer.

It localises to the cytoplasm. Functionally, multifunctional regulator of fatty acid metabolism. In Serratia proteamaculans (strain 568), this protein is Fatty acid metabolism regulator protein.